Reading from the N-terminus, the 239-residue chain is tRNA (guanine-N(7)-)-methyltransferase (239 aa).

Residues glutamate 69, glutamate 94, aspartate 121, and aspartate 144 each contribute to the S-adenosyl-L-methionine site. The active site involves aspartate 144. Lysine 148 provides a ligand contact to substrate. The interaction with RNA stretch occupies residues 150–155 (RHNKRR). Residues aspartate 180 and 217–220 (TKFE) each bind substrate.

It belongs to the class I-like SAM-binding methyltransferase superfamily. TrmB family. Monomer.

It catalyses the reaction guanosine(46) in tRNA + S-adenosyl-L-methionine = N(7)-methylguanosine(46) in tRNA + S-adenosyl-L-homocysteine. The protein operates within tRNA modification; N(7)-methylguanine-tRNA biosynthesis. Its function is as follows. Catalyzes the formation of N(7)-methylguanine at position 46 (m7G46) in tRNA. The protein is tRNA (guanine-N(7)-)-methyltransferase of Pectobacterium atrosepticum (strain SCRI 1043 / ATCC BAA-672) (Erwinia carotovora subsp. atroseptica).